Here is a 268-residue protein sequence, read N- to C-terminus: Protein MGF 300-1L (268 aa).

Topologically, residues 1-175 (MVSLTTCCLK…QTFKTFYAKN (175 aa)) are cytoplasmic. Residues 176–193 (YSLSTLYCIFLAIYYKLY) traverse the membrane as a helical segment. The Extracellular segment spans residues 194-268 (TALRKMVKIY…MYAFSQNDYW (75 aa)). Residue asparagine 227 is glycosylated (N-linked (GlcNAc...) asparagine; by host).

This sequence belongs to the asfivirus MGF 300 family.

It is found in the host membrane. Its function is as follows. Plays a role in virus cell tropism, and may be required for efficient virus replication in macrophages. The chain is Protein MGF 300-1L from African swine fever virus (strain Badajoz 1971 Vero-adapted) (Ba71V).